A 1068-amino-acid chain; its full sequence is TSC22 domain family protein 1 (1068 aa).

A required for interaction with TGFBR1 and promotion of TGF-beta signaling region spans residues 1-98 (MHQPPESTAA…SQAQLQAQPL (98 aa)). 3 disordered regions span residues 23 to 110 (AHPA…KKSG), 125 to 288 (ISSN…SPAS), and 602 to 623 (YSQA…QQLQ). The segment covering 36 to 55 (GSASALNAAGTGVGSSATSS) has biased composition (low complexity). A compositionally biased stretch (pro residues) spans 58 to 70 (FPPPSLLQPPPPA). Positions 84 to 100 (SLNLLSQAQLQAQPLAP) are enriched in low complexity. Over residues 133–142 (EDTESYDDLD) the composition is skewed to acidic residues. Residues 216-240 (HPHHLHHHHHIHHGHHLQHGHHHPS) show a composition bias toward basic residues. A compositionally biased stretch (low complexity) spans 241 to 250 (HVAVASASIP). The segment covering 261 to 271 (KLSTTGSSDSI) has biased composition (polar residues). Position 263 is a phosphoserine (serine 263). Over residues 272-288 (TPVAPTSAVSSSGSPAS) the composition is skewed to low complexity. A compositionally biased stretch (pro residues) spans 609–620 (VQTPLPGAPPPQ). A leucine-zipper region spans residues 1000–1021 (VLKEQIKELIEKNSQLEQENNL). Positions 1032 to 1068 (AQFQAQLQTGSPPATTQPQGTTQPPAQPASQGSGPTA) are disordered. The segment covering 1039–1068 (QTGSPPATTQPQGTTQPPAQPASQGSGPTA) has biased composition (low complexity).

Belongs to the TSC-22/Dip/Bun family. Forms homodimers. Forms heterodimers. Component of a complex composed of TSC22D1 (via N-terminus), TGFBR1 and TGFBR2; the interaction between TSC22D1 and TGFBR1 is inhibited by SMAD7 and promoted by TGFB1. Interacts with SMAD7; the interaction requires TGF-beta and the interaction is inhibited by TGFBR1. Interacts with TPT1/fortilin; interaction results in the destabilization of TSC22D1 protein and prevents TSC22D1-mediated apoptosis. Interacts with SMAD4 (via N-terminus). Interacts with ACVRL1/ALK1, ACVR1/ALK2, BMPR1A/ALK3, ACVR1B/ALK4, BMPR1B/ALK6, ACVR2A/ACTRII, and BMPR2. Interacts with SMAD6. Interacts with TFE3; the interaction is enhanced in the presence of TGF-beta. As to quaternary structure, forms a heterodimer with TSC22D4/THG1. In terms of assembly, forms a heterodimer with TSC22D4/THG1. Interacts with histone H1-2. Interacts with GNL3.

Its subcellular location is the cytoplasm. It is found in the nucleus. The protein resides in the cell membrane. It localises to the mitochondrion. In terms of biological role, transcriptional repressor. Acts on the C-type natriuretic peptide (CNP) promoter. Acts to promote CASP3-mediated apoptosis. Positively regulates TGF-beta signaling by interacting with SMAD7 which inhibits binding of SMAD7 to TGFBR1, preventing recruitment of SMURF ubiquitin ligases to TGFBR1 and inhibiting SMURF-mediated ubiquitination and degradation of TGFBR1. Contributes to enhancement of TGF-beta signaling by binding to and modulating the transcription activator activity of SMAD4. Promotes TGF-beta-induced transcription of COL1A2; via its interaction with TFE3 at E-boxes in the gene proximal promoter. Plays a role in the repression of hematopoietic precursor cell growth. Promotes IL2 deprivation-induced apoptosis in T-lymphocytes, via repression of TSC22D3/GILZ transcription and activation of the caspase cascade. Its function is as follows. May act to negatively regulate TGFB3 signaling and thereby inhibit cell death in mammary gland cells. Functionally, positively regulates cell death in response to TGFB3 during mammary gland involution. In Macaca fascicularis (Crab-eating macaque), this protein is TSC22 domain family protein 1.